Consider the following 266-residue polypeptide: Phosphatidylglycerol--prolipoprotein diacylglyceryl transferase (266 aa).

4 helical membrane passes run 14 to 34, 55 to 75, 91 to 111, and 117 to 137; these read FGPLQIHWYGLMYLAGFAFFW, FLFYGALGVILGGRIGYILFY, WKGGMAFHGGLIGVMVAMWLF, and VSMFVVADFVAPMVPVGLFFG. Arg138 is a binding site for a 1,2-diacyl-sn-glycero-3-phospho-(1'-sn-glycerol). 3 helical membrane passes run 172–192, 201–221, and 235–255; these read YPTQLLEALLEGIVLFIILMF, GAASGLFIGLYGLFRFYVEFF, and WVTMGQLLSLPMILIGFALVV.

It belongs to the Lgt family.

The protein localises to the cell inner membrane. The catalysed reaction is L-cysteinyl-[prolipoprotein] + a 1,2-diacyl-sn-glycero-3-phospho-(1'-sn-glycerol) = an S-1,2-diacyl-sn-glyceryl-L-cysteinyl-[prolipoprotein] + sn-glycerol 1-phosphate + H(+). It participates in protein modification; lipoprotein biosynthesis (diacylglyceryl transfer). Its function is as follows. Catalyzes the transfer of the diacylglyceryl group from phosphatidylglycerol to the sulfhydryl group of the N-terminal cysteine of a prolipoprotein, the first step in the formation of mature lipoproteins. The polypeptide is Phosphatidylglycerol--prolipoprotein diacylglyceryl transferase (Hydrogenovibrio crunogenus (strain DSM 25203 / XCL-2) (Thiomicrospira crunogena)).